The primary structure comprises 235 residues: Protein GrpE (235 aa).

Residues 1–18 (MTDGNQKPDGNSGEQVTV) show a composition bias toward polar residues. 2 disordered regions span residues 1-50 (MTDG…DAAH) and 198-235 (ESVD…PSGS). Residues 19-35 (TDKRRIDPETGEVRHVP) show a composition bias toward basic and acidic residues. Residues 215–235 (ADQGNSADTSGEQAESEPSGS) show a composition bias toward polar residues.

This sequence belongs to the GrpE family. As to quaternary structure, homodimer.

It localises to the cytoplasm. Participates actively in the response to hyperosmotic and heat shock by preventing the aggregation of stress-denatured proteins, in association with DnaK and GrpE. It is the nucleotide exchange factor for DnaK and may function as a thermosensor. Unfolded proteins bind initially to DnaJ; upon interaction with the DnaJ-bound protein, DnaK hydrolyzes its bound ATP, resulting in the formation of a stable complex. GrpE releases ADP from DnaK; ATP binding to DnaK triggers the release of the substrate protein, thus completing the reaction cycle. Several rounds of ATP-dependent interactions between DnaJ, DnaK and GrpE are required for fully efficient folding. The chain is Protein GrpE from Mycobacterium tuberculosis (strain ATCC 25177 / H37Ra).